The primary structure comprises 188 residues: MSVAAGDKPTNSRQEILEGARRCFAEHGYEGATVRRLEEATGKSRGAIFHHFGDKENLFLALAREDAARMAEVVSENGLVEVMRGMLEDPERYDWMSVRLEISKQLRTDPVFRAKWIDHQSVLDEAVRVRLSRNVDKGQMRTDVPIEVLHTFLETVLDGFISRLATGASTEGLSEVLDLVEGTVRKRD.

Positions 10–70 constitute an HTH tetR-type domain; it reads TNSRQEILEG…ALAREDAARM (61 aa). Positions 33-52 form a DNA-binding region, H-T-H motif; sequence TVRRLEEATGKSRGAIFHHF. Residues 79-80, Arg130, and Asn134 each bind citrate; that span reads LV. Glu181 lines the Mg(2+) pocket. Arg185 is a citrate binding site.

Homodimer.

Functionally, acnR negatively controls the expression of the aconitase gene acn. Binds to the imperfect inverted repeat in the acn promoter region. The polypeptide is HTH-type transcriptional repressor AcnR (Corynebacterium glutamicum (strain ATCC 13032 / DSM 20300 / JCM 1318 / BCRC 11384 / CCUG 27702 / LMG 3730 / NBRC 12168 / NCIMB 10025 / NRRL B-2784 / 534)).